Consider the following 318-residue polypeptide: tRNA-modifying protein YgfZ (318 aa).

The folate site is built by Trp28 and Trp182.

Belongs to the tRNA-modifying YgfZ family.

The protein resides in the cytoplasm. In terms of biological role, folate-binding protein involved in regulating the level of ATP-DnaA and in the modification of some tRNAs. It is probably a key factor in regulatory networks that act via tRNA modification, such as initiation of chromosomal replication. The sequence is that of tRNA-modifying protein YgfZ from Aliivibrio fischeri (strain MJ11) (Vibrio fischeri).